The chain runs to 293 residues: MRRVSMRSLKRYLKAIWDLLRLEHGLMYGFGVVIGIYVSDPFFSDLWKLLLGYLTAVFLQASTFALNDYFDYEVDLVNNRTDRPLVRGDLSRRIALALAIALMPPGFVAAYLISPLAFIFAFAVSVLACLYDYKLKELGFAGNVYIAFTMAAPFLFGSIISSGWITEKTALLASMAFLTGVGREIMKGIEDVEGDALRDVRSLARTMGERKAASIASLFYLTAVSISPIPLFLLPEFLFDLKYAVPVSVTDVLLIYVALRLVGDYERESIRKYRKVTLVAMVLGLVGFFAGAF.

The next 7 membrane-spanning stretches (helical) occupy residues 26-46, 50-70, 107-127, 140-160, 215-235, 237-257, and 273-293; these read LMYG…FSDL, LLGY…NDYF, FVAA…VSVL, FAGN…GSII, IASL…FLLP, FLFD…LIYV, and YRKV…AGAF.

The protein belongs to the UbiA prenyltransferase family. DGGGP synthase subfamily. Mg(2+) is required as a cofactor.

Its subcellular location is the cell membrane. It carries out the reaction sn-3-O-(geranylgeranyl)glycerol 1-phosphate + (2E,6E,10E)-geranylgeranyl diphosphate = 2,3-bis-O-(geranylgeranyl)-sn-glycerol 1-phosphate + diphosphate. It participates in membrane lipid metabolism; glycerophospholipid metabolism. In terms of biological role, prenyltransferase that catalyzes the transfer of the geranylgeranyl moiety of geranylgeranyl diphosphate (GGPP) to the C2 hydroxyl of (S)-3-O-geranylgeranylglyceryl phosphate (GGGP). This reaction is the second ether-bond-formation step in the biosynthesis of archaeal membrane lipids. This Archaeoglobus fulgidus (strain ATCC 49558 / DSM 4304 / JCM 9628 / NBRC 100126 / VC-16) protein is Digeranylgeranylglyceryl phosphate synthase.